The primary structure comprises 323 residues: Mas-related G-protein coupled receptor member X1 (323 aa).

Over 1–30 (MDPTISSLSTESTTLNKTGHPSCRPILTLS) the chain is Extracellular. Asparagine 16 is a glycosylation site (N-linked (GlcNAc...) asparagine). The chain crosses the membrane as a helical span at residues 31 to 51 (FLVPIITLLGLAGNTIVLWLL). Over 52–59 (GFRMRRKA) the chain is Cytoplasmic. Residues 60-80 (ISVYVLNLSLADSFFLCCHFI) form a helical membrane-spanning segment. Residues 81–100 (DSLMRIMNFYGIYAHKLSKE) lie on the Extracellular side of the membrane. A helical transmembrane segment spans residues 101 to 121 (ILGNAAIIPYISGLSILSAIS). Residues 122 to 143 (TERCLSVLWPIWYHCHRPRNMS) lie on the Cytoplasmic side of the membrane. A helical membrane pass occupies residues 144–164 (AIICVLIWVLSFLMGILDWFF). The Extracellular segment spans residues 165-180 (SGFLGETHHHLWKNVD). A helical transmembrane segment spans residues 181-201 (FIVTAFLIFLFMLLFGSSLAL). Topologically, residues 202–226 (LVRILCGSRRKPLSRLYVTISLTVM) are cytoplasmic. The helical transmembrane segment at 227–247 (VYLICGLPLGLYLFLLYWFGI) threads the bilayer. The Extracellular segment spans residues 248–258 (HLHYPFCHIYQ). A helical membrane pass occupies residues 259–279 (VTVLLSCVNSSANPIIYFLVG). The Cytoplasmic portion of the chain corresponds to 280–323 (SFRHRKKHRSLKMVLKRALEETPEEDEYTDSHVQKPTEISERRC).

It belongs to the G-protein coupled receptor 1 family. Mas subfamily. As to expression, uniquely localized in a subset of small dorsal root and trigeminal sensory neurons. Associated preferentially with IB4 class of small-diameter somatosensory afferents (also known as nociceptors).

Its subcellular location is the cell membrane. Orphan receptor activated by neuropeptides terminating in Arg-Phe or Arg-Phe-amide. Mediates its action by association with G proteins that activate a phosphatidylinositol-calcium second messenger system. Its effect is mediated by G(q) and G(11) proteins. May regulate the function of nociceptive neurons by modulation of pain perception. This chain is Mas-related G-protein coupled receptor member X1 (Mrgprx1), found in Rattus norvegicus (Rat).